We begin with the raw amino-acid sequence, 330 residues long: MAQLMIDIAGTELTAEDKKLLAAPAVNGLILFTRNFASLEQLQELIREARAAAAKPLLIAVDHEGGRVQRFREGFSAIPSMGSLQKIENEDERQRAARDLGWLMAAEVQAVGIDISFAPVLDVDDCSDVIGDRAFSAVPSEISKLASSFIEGMHEAGMACTGKHFPGHGSVQADSHIAIPEDDRTLEQIRAHDLKPFLSLIQKLDGIMPAHVIYPQIDPQPAGFSEFWLQQILRSELQFNGTIFSDDLSMQGATVAGDMEQRAVAALKAGCDMILVCNDRAGAVQVLDADLPATEPESAQRVNRMLMSSNAVSLEELKRTQRWEQAQRWL.

Substrate is bound by residues D62, R70, R133, and 163–164 (KH). Residue H176 is the Proton donor/acceptor of the active site. D246 serves as the catalytic Nucleophile.

It belongs to the glycosyl hydrolase 3 family. NagZ subfamily.

It is found in the cytoplasm. It carries out the reaction Hydrolysis of terminal non-reducing N-acetyl-D-hexosamine residues in N-acetyl-beta-D-hexosaminides.. Its pathway is cell wall biogenesis; peptidoglycan recycling. In terms of biological role, plays a role in peptidoglycan recycling by cleaving the terminal beta-1,4-linked N-acetylglucosamine (GlcNAc) from peptide-linked peptidoglycan fragments, giving rise to free GlcNAc, anhydro-N-acetylmuramic acid and anhydro-N-acetylmuramic acid-linked peptides. The protein is Beta-hexosaminidase of Idiomarina loihiensis (strain ATCC BAA-735 / DSM 15497 / L2-TR).